An 895-amino-acid polypeptide reads, in one-letter code: Eukaryotic translation initiation factor 3 subunit C (895 aa).

A disordered region spans residues 1–108; that stretch reads MSGFFRKVGD…DSDSEEEVKK (108 aa). 2 stretches are compositionally biased toward acidic residues: residues 11-31 and 52-75; these read SDSESDISSSEEELSELESGD and DDSDSDDDDSDDDDQDSLDSDDDN. Residues 638–812 form the PCI domain; that stretch reads FHMHINLELL…NVVSFHRLEL (175 aa). Over residues 838 to 860 the composition is skewed to basic and acidic residues; it reads DAKLGEGKEQRSGAGGERGDREG. Positions 838–895 are disordered; the sequence is DAKLGEGKEQRSGAGGERGDREGGQPGGRRERRGGSAARGRGRGRGRAQQFQALGQKV. Residues 884–895 show a composition bias toward low complexity; it reads RAQQFQALGQKV.

The protein belongs to the eIF-3 subunit C family. Component of the eukaryotic translation initiation factor 3 (eIF-3) complex.

The protein localises to the cytoplasm. Its function is as follows. Component of the eukaryotic translation initiation factor 3 (eIF-3) complex, which is involved in protein synthesis of a specialized repertoire of mRNAs and, together with other initiation factors, stimulates binding of mRNA and methionyl-tRNAi to the 40S ribosome. The eIF-3 complex specifically targets and initiates translation of a subset of mRNAs involved in cell proliferation. This is Eukaryotic translation initiation factor 3 subunit C from Mycosarcoma maydis (Corn smut fungus).